A 132-amino-acid chain; its full sequence is Small ribosomal subunit protein uS8 (132 aa).

This sequence belongs to the universal ribosomal protein uS8 family. Part of the 30S ribosomal subunit. Contacts proteins S5 and S12.

Its function is as follows. One of the primary rRNA binding proteins, it binds directly to 16S rRNA central domain where it helps coordinate assembly of the platform of the 30S subunit. This is Small ribosomal subunit protein uS8 from Streptococcus thermophilus (strain CNRZ 1066).